Consider the following 131-residue polypeptide: D-ribose pyranase (131 aa).

Residue His-20 is the Proton donor of the active site. Substrate is bound by residues Asp-28, His-98, and 120-122 (YSN).

It belongs to the RbsD / FucU family. RbsD subfamily. In terms of assembly, homodecamer.

The protein resides in the cytoplasm. The enzyme catalyses beta-D-ribopyranose = beta-D-ribofuranose. The protein operates within carbohydrate metabolism; D-ribose degradation; D-ribose 5-phosphate from beta-D-ribopyranose: step 1/2. Catalyzes the interconversion of beta-pyran and beta-furan forms of D-ribose. This Pediococcus pentosaceus (strain ATCC 25745 / CCUG 21536 / LMG 10740 / 183-1w) protein is D-ribose pyranase.